A 256-amino-acid chain; its full sequence is Pimeloyl-[acyl-carrier protein] methyl ester esterase (256 aa).

Residues 15–242 (HLVLLHGWGL…AAHAPFISHP (228 aa)) form the AB hydrolase-1 domain. Substrate-binding positions include Trp-22, 82–83 (SL), and 143–147 (FLALQ). Ser-82 serves as the catalytic Nucleophile. Residues Asp-207 and His-235 contribute to the active site. His-235 provides a ligand contact to substrate.

It belongs to the AB hydrolase superfamily. Carboxylesterase BioH family. As to quaternary structure, monomer.

Its subcellular location is the cytoplasm. The enzyme catalyses 6-carboxyhexanoyl-[ACP] methyl ester + H2O = 6-carboxyhexanoyl-[ACP] + methanol + H(+). It functions in the pathway cofactor biosynthesis; biotin biosynthesis. In terms of biological role, the physiological role of BioH is to remove the methyl group introduced by BioC when the pimeloyl moiety is complete. It allows to synthesize pimeloyl-ACP via the fatty acid synthetic pathway through the hydrolysis of the ester bonds of pimeloyl-ACP esters. This is Pimeloyl-[acyl-carrier protein] methyl ester esterase from Escherichia coli O81 (strain ED1a).